A 106-amino-acid chain; its full sequence is MIITTTPTIEGKRIVRYCGVVAGEAILGANLFKDLFANIRDMVGGRSATYERELQRARDIALRELEERAEELGATAVVGVDLDYEVMGQGNGMLMVSASGTAVVVE.

It belongs to the UPF0145 family.

The chain is UPF0145 protein GSU2791 from Geobacter sulfurreducens (strain ATCC 51573 / DSM 12127 / PCA).